A 276-amino-acid polypeptide reads, in one-letter code: NADPH-dependent 7-cyano-7-deazaguanine reductase (276 aa).

Position 83-85 (83-85 (IES)) interacts with substrate. 85–86 (SK) contributes to the NADPH binding site. C184 (thioimide intermediate) is an active-site residue. D191 functions as the Proton donor in the catalytic mechanism. Substrate is bound at residue 223–224 (HE). 252-253 (RG) contributes to the NADPH binding site.

Belongs to the GTP cyclohydrolase I family. QueF type 2 subfamily. Homodimer.

The protein resides in the cytoplasm. The catalysed reaction is 7-aminomethyl-7-carbaguanine + 2 NADP(+) = 7-cyano-7-deazaguanine + 2 NADPH + 3 H(+). It functions in the pathway tRNA modification; tRNA-queuosine biosynthesis. Catalyzes the NADPH-dependent reduction of 7-cyano-7-deazaguanine (preQ0) to 7-aminomethyl-7-deazaguanine (preQ1). The sequence is that of NADPH-dependent 7-cyano-7-deazaguanine reductase from Pseudomonas entomophila (strain L48).